Here is a 130-residue protein sequence, read N- to C-terminus: Large ribosomal subunit protein bL17 (130 aa).

The protein belongs to the bacterial ribosomal protein bL17 family. As to quaternary structure, part of the 50S ribosomal subunit. Contacts protein L32.

This is Large ribosomal subunit protein bL17 from Nitrosomonas eutropha (strain DSM 101675 / C91 / Nm57).